Consider the following 92-residue polypeptide: Kinetoplastid membrane protein 11 (92 aa).

Belongs to the KMP-11 family. Monomer.

It is found in the cytoplasm. It localises to the cytoskeleton. Its function is as follows. May be involved in the regulation of the cytoskeleton through interaction with the subpellicular microtubules. May be involved in parasite mobility and attachment to the surface of the host cell. Behaves as a strong immunogen during infection. This Trypanosoma brucei brucei protein is Kinetoplastid membrane protein 11 (KMP-11/1).